Consider the following 258-residue polypeptide: Hydroxyethylthiazole kinase (258 aa).

Met-37 lines the substrate pocket. 2 residues coordinate ATP: Arg-112 and Thr-158. Ala-185 serves as a coordination point for substrate.

It belongs to the Thz kinase family. The cofactor is Mg(2+).

The catalysed reaction is 5-(2-hydroxyethyl)-4-methylthiazole + ATP = 4-methyl-5-(2-phosphooxyethyl)-thiazole + ADP + H(+). It functions in the pathway cofactor biosynthesis; thiamine diphosphate biosynthesis; 4-methyl-5-(2-phosphoethyl)-thiazole from 5-(2-hydroxyethyl)-4-methylthiazole: step 1/1. Functionally, catalyzes the phosphorylation of the hydroxyl group of 4-methyl-5-beta-hydroxyethylthiazole (THZ). The sequence is that of Hydroxyethylthiazole kinase from Rhizobium etli (strain CIAT 652).